The following is a 260-amino-acid chain: Isoprenyl transferase (260 aa).

Aspartate 38 is a catalytic residue. Position 38 (aspartate 38) interacts with Mg(2+). Substrate is bound by residues 39 to 42 (GNGR), tryptophan 43, arginine 51, histidine 55, and 83 to 85 (STE). Asparagine 86 (proton acceptor) is an active-site residue. Residues tryptophan 87, arginine 89, arginine 206, and 212-214 (RLS) contribute to the substrate site. Glutamate 225 provides a ligand contact to Mg(2+).

Belongs to the UPP synthase family. In terms of assembly, homodimer. It depends on Mg(2+) as a cofactor.

Functionally, catalyzes the condensation of isopentenyl diphosphate (IPP) with allylic pyrophosphates generating different type of terpenoids. The sequence is that of Isoprenyl transferase from Heliobacterium mobile (Heliobacillus mobilis).